The primary structure comprises 160 residues: Small ribosomal subunit protein bS6 (160 aa).

Residues 96-160 (RKVKRFIPRA…PRTRKVSKEQ (65 aa)) form a disordered region. Residues 126–145 (TTDASKTEASTEATASKQSE) are compositionally biased toward low complexity. Residues 151–160 (PRTRKVSKEQ) are compositionally biased toward basic residues.

The protein belongs to the bacterial ribosomal protein bS6 family.

Binds together with bS18 to 16S ribosomal RNA. In Metamycoplasma arthritidis (strain 158L3-1) (Mycoplasma arthritidis), this protein is Small ribosomal subunit protein bS6.